Consider the following 195-residue polypeptide: uncharacterized protein (195 aa).

Residues 1–35 (MASSSSAALRPFGTARLTPGRQTGRQTQQQISAPE) are disordered. Residues 20–30 (GRQTGRQTQQQ) show a composition bias toward low complexity. Residues 76–184 (GVTVIPRVAR…PASINMALEA (109 aa)) form the MSP domain.

This is an uncharacterized protein from Caenorhabditis elegans.